The following is a 132-amino-acid chain: Small ribosomal subunit protein uS8 (132 aa).

It belongs to the universal ribosomal protein uS8 family. In terms of assembly, part of the 30S ribosomal subunit. Contacts proteins S5 and S12.

One of the primary rRNA binding proteins, it binds directly to 16S rRNA central domain where it helps coordinate assembly of the platform of the 30S subunit. The polypeptide is Small ribosomal subunit protein uS8 (Natranaerobius thermophilus (strain ATCC BAA-1301 / DSM 18059 / JW/NM-WN-LF)).